Reading from the N-terminus, the 4650-residue chain is Nonribosomal peptide synthetase lenA (4650 aa).

Residues 227–628 (GSILDTIRAK…DGSVIHVGRK (402 aa)) form an adenylation 1 region. In terms of domain architecture, Carrier 1 spans 773 to 849 (PPETVLEKAL…KLAQYLRNTE (77 aa)). The residue at position 810 (S810) is an O-(pantetheine 4'-phosphoryl)serine. The segment at 890–1212 (EDCYPCTALQ…CDFQSQLIFQ (323 aa)) is condensation 1. The tract at residues 1288 to 1622 (ELELNAQKEP…RKIRPGYLGR (335 aa)) is adenylation 2. A Carrier 2 domain is found at 1745 to 1822 (PPVSAAEKKW…EIAALSETRD (78 aa)). S1782 bears the O-(pantetheine 4'-phosphoryl)serine mark. A condensation 2 region spans residues 1850-2110 (ATNLIAATVH…GEKTRPGGGA (261 aa)). An adenylation 3 region spans residues 2183 to 2511 (RCVHDLVHDA…RTGDLIKLRG (329 aa)). In terms of domain architecture, Carrier 3 spans 2630–2708 (APQNRLQHDI…EADVGLDHAS (79 aa)). S2667 carries the O-(pantetheine 4'-phosphoryl)serine modification. The epimerase stretch occupies residues 2722 to 2998 (ESMARALAVI…KDARRRSPAN (277 aa)). The interval 3128 to 3565 (VQDVYPCTPI…VDDSQRQQIL (438 aa)) is condensation 3. Residues 3578-3980 (CVHHIIHQRC…FVGRKDNQIK (403 aa)) are adenylation 4. The Carrier 4 domain occupies 4114–4190 (TPSTPLEAQL…QLAAVLEEGA (77 aa)). Residue S4151 is modified to O-(pantetheine 4'-phosphoryl)serine. Residues 4249 to 4648 (HMVLTFSQPV…TTTPEKLVAE (400 aa)) form a condensation 4 region.

It belongs to the NRP synthetase family. Pantetheine 4'-phosphate is required as a cofactor.

The protein operates within alkaloid biosynthesis. In terms of biological role, nonribosomal peptide synthetase; part of the gene cluster that mediates the biosynthesis of the ergot alkaloids lentopeptins A and B. Within the pathway, lenA catalyzes the biosynthesis of the Ala-Val-Ala peptide chain, including a cinnamic acid moiety as the starting unit. The release of the peptide from the enzyme is accomplished via a cyclization reaction catalyzed by the terminal condensation-like (Ct) domain of lenA to form the N-acyldiketopiperazine intermediate. The reaction appears to proceed through a nucleophilic attack on the carbonyl carbon by a lone electron pair of the valine amide nitrogen. The phenylalanine ammonia-lyase lenB provides the starter unit for the synthesis of the N-acyldiketopiperazine intermediate by the NRPS lenA, while the cytochrome P450 monooxygenase lenC is involved in the post-NRPS oxidative modification steps to form lentopeptins A and B. The sequence is that of Nonribosomal peptide synthetase lenA from Aspergillus lentulus.